A 197-amino-acid chain; its full sequence is Ribonuclease HII (197 aa).

Residues 10–197 (ELIAGVDEVG…APVRKLLNTL (188 aa)) form the RNase H type-2 domain. A divalent metal cation contacts are provided by aspartate 16, glutamate 17, and aspartate 108.

The protein belongs to the RNase HII family. Mn(2+) is required as a cofactor. Mg(2+) serves as cofactor.

Its subcellular location is the cytoplasm. It carries out the reaction Endonucleolytic cleavage to 5'-phosphomonoester.. Its function is as follows. Endonuclease that specifically degrades the RNA of RNA-DNA hybrids. The sequence is that of Ribonuclease HII (rnhB) from Pasteurella multocida (strain Pm70).